The following is a 177-amino-acid chain: MNTPVGVAEIVLGPGEVVFQTRPTRLRTLLGSCVAITFWHPWRRIGGMCHFMLPGRIRRHQPLDGRYADEAMEILIRHALANGTLPEEYQVKLFGGGEMFPAHRHDPHMRNVADSNVHAALALAEQNRLKLMAQDLGSTGHRSIIFDLWDGNVWVRHQPMEAMEKDAKQKNQRTAGR.

This sequence belongs to the CheD family.

The enzyme catalyses L-glutaminyl-[protein] + H2O = L-glutamyl-[protein] + NH4(+). In terms of biological role, probably deamidates glutamine residues to glutamate on methyl-accepting chemotaxis receptors (MCPs), playing an important role in chemotaxis. This Pseudomonas syringae pv. syringae (strain B728a) protein is Probable chemoreceptor glutamine deamidase CheD.